The sequence spans 555 residues: Glutamine--tRNA ligase (555 aa).

Residues 34–44 (PEPNGYLHIGH) carry the 'HIGH' region motif. ATP-binding positions include 35–37 (EPN) and 41–47 (HIGHAKS). L-glutamine contacts are provided by D67 and Y212. ATP-binding positions include T231, 261–262 (RL), and 269–271 (MSK). A 'KMSKS' region motif is present at residues 268–272 (VMSKR).

Belongs to the class-I aminoacyl-tRNA synthetase family. In terms of assembly, monomer.

The protein localises to the cytoplasm. The enzyme catalyses tRNA(Gln) + L-glutamine + ATP = L-glutaminyl-tRNA(Gln) + AMP + diphosphate. The chain is Glutamine--tRNA ligase from Cronobacter sakazakii (strain ATCC BAA-894) (Enterobacter sakazakii).